A 331-amino-acid chain; its full sequence is Glycerol-3-phosphate dehydrogenase [NAD(P)+] (331 aa).

The NADPH site is built by S10, W11, and K101. Sn-glycerol 3-phosphate-binding residues include K101, G132, and S134. A136 is an NADPH binding site. Sn-glycerol 3-phosphate-binding residues include K188, D241, S251, R252, and N253. Catalysis depends on K188, which acts as the Proton acceptor. Position 252 (R252) interacts with NADPH. Residues V276 and E278 each coordinate NADPH.

It belongs to the NAD-dependent glycerol-3-phosphate dehydrogenase family.

The protein resides in the cytoplasm. The enzyme catalyses sn-glycerol 3-phosphate + NAD(+) = dihydroxyacetone phosphate + NADH + H(+). It catalyses the reaction sn-glycerol 3-phosphate + NADP(+) = dihydroxyacetone phosphate + NADPH + H(+). It participates in membrane lipid metabolism; glycerophospholipid metabolism. In terms of biological role, catalyzes the reduction of the glycolytic intermediate dihydroxyacetone phosphate (DHAP) to sn-glycerol 3-phosphate (G3P), the key precursor for phospholipid synthesis. The polypeptide is Glycerol-3-phosphate dehydrogenase [NAD(P)+] (Acholeplasma laidlawii (strain PG-8A)).